Reading from the N-terminus, the 502-residue chain is Probable zinc metalloprotease MGG_02107 (502 aa).

The signal sequence occupies residues 1-21 (MRSPPGAVAALASVAAQLATA). Zn(2+)-binding residues include histidine 182, aspartate 202, and glutamate 235. Asparagine 250 carries an N-linked (GlcNAc...) asparagine glycan. Aspartate 262 lines the Zn(2+) pocket. Residues 284–307 (QGGSPAGESKERAETRASIGGEND) are disordered. 3 N-linked (GlcNAc...) asparagine glycosylation sites follow: asparagine 375, asparagine 417, and asparagine 427. In terms of domain architecture, Fibronectin type-III spans 414–502 (QVRNVTVDTS…KSPATMPFPG (89 aa)).

Belongs to the peptidase M28 family. M28B subfamily. The cofactor is Zn(2+).

It localises to the secreted. This is Probable zinc metalloprotease MGG_02107 from Pyricularia oryzae (strain 70-15 / ATCC MYA-4617 / FGSC 8958) (Rice blast fungus).